The primary structure comprises 319 residues: D-alanine--D-alanine ligase B (319 aa).

An ATP-grasp domain is found at 117–312 (KRVWLSLGLP…FQQLVLAILA (196 aa)). 143–198 (AQRLGFPLIVKPAHEGSSIGMAKVGGLDELIAAWREAARYDSQVLVEQWISGPEFT) contributes to the ATP binding site. Positions 266, 279, and 281 each coordinate Mg(2+).

Belongs to the D-alanine--D-alanine ligase family. Mg(2+) serves as cofactor. It depends on Mn(2+) as a cofactor.

The protein resides in the cytoplasm. It carries out the reaction 2 D-alanine + ATP = D-alanyl-D-alanine + ADP + phosphate + H(+). It functions in the pathway cell wall biogenesis; peptidoglycan biosynthesis. In terms of biological role, cell wall formation. This Pseudomonas aeruginosa (strain ATCC 15692 / DSM 22644 / CIP 104116 / JCM 14847 / LMG 12228 / 1C / PRS 101 / PAO1) protein is D-alanine--D-alanine ligase B.